A 471-amino-acid polypeptide reads, in one-letter code: Putative multidrug resistance protein MdtD (471 aa).

Over 1–11 (MTDLPDSTRWQ) the chain is Periplasmic. Residues 12–32 (LWIVAFGFFMQSLDTTIVNTA) traverse the membrane as a helical segment. The Cytoplasmic segment spans residues 33-48 (LPSMAQSLGESPLHMH). Residues 49–69 (MVIVSYVLTVAVMLPASGWLA) traverse the membrane as a helical segment. Topologically, residues 70 to 76 (DKVGVRN) are periplasmic. Residues 77 to 97 (IFFTAIVLFTLGSLFCALSGT) form a helical membrane-spanning segment. At 98 to 101 (LNEL) the chain is on the cytoplasmic side. The helical transmembrane segment at 102–124 (LLARALQGVGGAMMVPVGRLTVM) threads the bilayer. Residues 125-137 (KIVPREQYMAAMT) are Periplasmic-facing. A helical membrane pass occupies residues 138–158 (FVTLPGQVGPLLGPALGGLLV). Residues 159–164 (EYASWH) are Cytoplasmic-facing. A helical transmembrane segment spans residues 165-185 (WIFLINIPVGIIGAIATLMLM). Residues 186–196 (PNYTMQTRRFD) are Periplasmic-facing. A helical membrane pass occupies residues 197-217 (LSGFLLLAVGMAVLTLALDGS). Residues 218–224 (KGTGFSP) lie on the Cytoplasmic side of the membrane. Residues 225-245 (LAIAGLVAVGVVALVLYLLHA) form a helical membrane-spanning segment. Residues 246-262 (QNNNRALFSLKLFRTRT) lie on the Periplasmic side of the membrane. A helical transmembrane segment spans residues 263-283 (FSLGLAGSFAGRIGSGMLPFM). The Cytoplasmic portion of the chain corresponds to 284 to 285 (TP). A helical membrane pass occupies residues 286 to 306 (VFLQIGLGFSPFHAGLMMIPM). The Periplasmic portion of the chain corresponds to 307-341 (VLGSMGMKRIVVQVVNRFGYRRVLVATTLGLSLVT). A helical transmembrane segment spans residues 342–362 (LLFMTTALLGWYYVLPFVLFL). At 363–395 (QGMVNSTRFSSMNTLTLKDLPDNLASSGNSLLS) the chain is on the cytoplasmic side. The helical transmembrane segment at 396 to 416 (MIMQLSMSIGVTIAGLLLGLF) threads the bilayer. Residues 417–430 (GSQHVSVDSGTTQT) lie on the Periplasmic side of the membrane. A helical transmembrane segment spans residues 431 to 451 (VFMYTWLSMAFIIALPAFVFA). Over 452–471 (RVPSDTHQNVAISRRKRSAQ) the chain is Cytoplasmic.

This sequence belongs to the major facilitator superfamily. TCR/Tet family.

The protein resides in the cell inner membrane. The polypeptide is Putative multidrug resistance protein MdtD (Escherichia coli O45:K1 (strain S88 / ExPEC)).